We begin with the raw amino-acid sequence, 362 residues long: Adenosine deaminase (362 aa).

2 residues coordinate Zn(2+): His19 and His21. Residues His21, Asp23, and Gly181 each coordinate substrate. His208 serves as a coordination point for Zn(2+). Glu211 functions as the Proton donor in the catalytic mechanism. Residue Asp300 coordinates Zn(2+).

This sequence belongs to the metallo-dependent hydrolases superfamily. Adenosine and AMP deaminases family. Adenosine deaminase subfamily. Zn(2+) is required as a cofactor.

The catalysed reaction is adenosine + H2O + H(+) = inosine + NH4(+). The enzyme catalyses 2'-deoxyadenosine + H2O + H(+) = 2'-deoxyinosine + NH4(+). Functionally, catalyzes the hydrolytic deamination of adenosine and 2-deoxyadenosine. This Mycobacteroides abscessus (strain ATCC 19977 / DSM 44196 / CCUG 20993 / CIP 104536 / JCM 13569 / NCTC 13031 / TMC 1543 / L948) (Mycobacterium abscessus) protein is Adenosine deaminase.